The chain runs to 862 residues: Protein kintoun (862 aa).

Disordered regions lie at residues 208–229, 564–602, 626–670, and 743–854; these read KLLP…RTTK, TKRE…KKER, GEGA…STMP, and RREV…QFKS. Residues 564-586 are compositionally biased toward basic and acidic residues; it reads TKREEHGEPECDEKDGSEAEKAR. The span at 587–601 shows a compositional bias: basic residues; sequence TLQKAKRNSRKKKKE. Basic and acidic residues-rich tracts occupy residues 748-757 and 766-785; these read RRADARRMSE and KDAH…HDEK.

It belongs to the PIH1 family. Kintoun subfamily.

Its subcellular location is the cytoplasm. Required for cytoplasmic pre-assembly of axonemal dyneins, thereby playing a central role in motility in cilia and flagella. Involved in pre-assembly of dynein arm complexes in the cytoplasm before intraflagellar transport loads them for the ciliary compartment. This is Protein kintoun from Anopheles gambiae (African malaria mosquito).